Consider the following 203-residue polypeptide: Proteasome subunit beta 2 (203 aa).

A propeptide spans Met-1–Gly-10 (removed in mature form; by autocatalysis). The Nucleophile role is filled by Thr-11.

This sequence belongs to the peptidase T1B family. As to quaternary structure, the 20S proteasome core is composed of 14 alpha and 14 beta subunits that assemble into four stacked heptameric rings, resulting in a barrel-shaped structure. The two inner rings, each composed of seven catalytic beta subunits, are sandwiched by two outer rings, each composed of seven alpha subunits. The catalytic chamber with the active sites is on the inside of the barrel. Has a gated structure, the ends of the cylinder being occluded by the N-termini of the alpha-subunits. Is capped at one or both ends by the proteasome regulatory ATPase, PAN.

The protein localises to the cytoplasm. The catalysed reaction is Cleavage of peptide bonds with very broad specificity.. Its activity is regulated as follows. The formation of the proteasomal ATPase PAN-20S proteasome complex, via the docking of the C-termini of PAN into the intersubunit pockets in the alpha-rings, triggers opening of the gate for substrate entry. Interconversion between the open-gate and close-gate conformations leads to a dynamic regulation of the 20S proteasome proteolysis activity. Its function is as follows. Component of the proteasome core, a large protease complex with broad specificity involved in protein degradation. The chain is Proteasome subunit beta 2 from Sulfolobus acidocaldarius (strain ATCC 33909 / DSM 639 / JCM 8929 / NBRC 15157 / NCIMB 11770).